Consider the following 22-residue polypeptide: Caerin-3.4 (22 aa).

At lysine 22 the chain carries Lysine amide.

As to expression, expressed by the skin parotoid and/or rostral glands.

The protein resides in the secreted. Its function is as follows. Antibacterial peptide, that adopts an alpha helical conformation which can disrupt bacterial membranes. Each caerin displays a different antimicrobial specificity. The sequence is that of Caerin-3.4 from Ranoidea caerulea (Green tree frog).